Here is a 39-residue protein sequence, read N- to C-terminus: Natriuretic peptide HsNP-a (39 aa).

The propeptide occupies 1–8; it reads SGSKTAKI. An intrachain disulfide couples Cys-12 to Cys-28.

This sequence belongs to the natriuretic peptide family. Expressed by the venom gland.

The protein localises to the secreted. Snake venom natriuretic peptide that targets both NPR1 and NPR2. Exhibits hypotensive and vasodepressor activities. The chain is Natriuretic peptide HsNP-a from Hoplocephalus stephensii (Stephens's banded snake).